Here is a 287-residue protein sequence, read N- to C-terminus: Protease HtpX (287 aa).

2 consecutive transmembrane segments (helical) span residues 4 to 24 and 33 to 53; these read IFLL…VMSI and GGLL…SLAI. A Zn(2+)-binding site is contributed by His139. Glu140 is a catalytic residue. His143 contributes to the Zn(2+) binding site. Helical transmembrane passes span 154-174 and 195-215; these read LIQG…AGII and AVVF…VAYF. Glu220 serves as a coordination point for Zn(2+).

This sequence belongs to the peptidase M48B family. The cofactor is Zn(2+).

It is found in the cell inner membrane. This Shewanella halifaxensis (strain HAW-EB4) protein is Protease HtpX.